The chain runs to 139 residues: Actin-depolymerizing factor 1 (139 aa).

In terms of domain architecture, ADF-H spans 5–139 (ASGMAVHDDC…GLDVIQSRAN (135 aa)).

Belongs to the actin-binding proteins ADF family.

In terms of biological role, actin-depolymerizing protein. Severs actin filaments (F-actin) and binds to actin monomers. The protein is Actin-depolymerizing factor 1 (ADF1) of Petunia hybrida (Petunia).